We begin with the raw amino-acid sequence, 56 residues long: Prokaryotic ubiquitin-like protein UBact (56 aa).

Positions 1 to 28 (MPQDQQRKKQFDPNPNRDDSQRKTPVDK) are enriched in basic and acidic residues. Residues 1–33 (MPQDQQRKKQFDPNPNRDDSQRKTPVDKEIDDI) form a disordered region. Position 56 is a deamidated glutamine (Gln56). Residue Gln56 forms an Isoglutamyl lysine isopeptide (Gln-Lys) (interchain with K-? in acceptor proteins) linkage.

The protein belongs to the ubiquitin-like protein UBact family. May be modified by deamidation of its C-terminal glutamine to glutamate by the adjacently encoded deamidase. This could be a prerequisite to the subsequent conjugation, as shown in the other prokaryotic ubiquitin-like protein Pup.

Functionally, may function as a protein modifier covalently attached to lysine residues of substrate proteins. This may serve to target the modified proteins for degradation by proteasomes. The chain is Prokaryotic ubiquitin-like protein UBact from Yanofskybacteria sp. (strain GW2011_GWA1_39_13).